We begin with the raw amino-acid sequence, 212 residues long: ATP-dependent Clp protease proteolytic subunit (212 aa).

Ser-113 (nucleophile) is an active-site residue. His-138 is a catalytic residue.

Belongs to the peptidase S14 family. As to quaternary structure, fourteen ClpP subunits assemble into 2 heptameric rings which stack back to back to give a disk-like structure with a central cavity, resembling the structure of eukaryotic proteasomes.

The protein localises to the cytoplasm. The enzyme catalyses Hydrolysis of proteins to small peptides in the presence of ATP and magnesium. alpha-casein is the usual test substrate. In the absence of ATP, only oligopeptides shorter than five residues are hydrolyzed (such as succinyl-Leu-Tyr-|-NHMec, and Leu-Tyr-Leu-|-Tyr-Trp, in which cleavage of the -Tyr-|-Leu- and -Tyr-|-Trp bonds also occurs).. Functionally, cleaves peptides in various proteins in a process that requires ATP hydrolysis. Has a chymotrypsin-like activity. Plays a major role in the degradation of misfolded proteins. This Saccharophagus degradans (strain 2-40 / ATCC 43961 / DSM 17024) protein is ATP-dependent Clp protease proteolytic subunit.